A 314-amino-acid chain; its full sequence is MKIILANPRGFCAGVDRAISIVELALEIHGAPIYVRHEVVHNRFVVNGLRDRGAIFVEELSEVPDGAIVIFSAHGVSQAVRQEAKDRNLKVFDATCPLVTKVHMQVARASRKGTKAILIGHKGHPEVEGTMGQYSNEDGGIFLIEKVEDIARLPMQDNDDLTFMTQTTLSLDDTAETIAALKEKYPAIQGPHKNDICYATTNRQEAVRELAKLSDLVLVVGSKNSSNSNRLAELASRMGIKSQLLDDPSDIQDDWFNDVKTIGITAGASAPEELVQSIISRLKEFGADTIEELQGLEENMFFEVPKELRIKEVN.

Residue Cys12 coordinates [4Fe-4S] cluster. (2E)-4-hydroxy-3-methylbut-2-enyl diphosphate contacts are provided by His41 and His74. Dimethylallyl diphosphate is bound by residues His41 and His74. Residues His41 and His74 each coordinate isopentenyl diphosphate. Residue Cys96 coordinates [4Fe-4S] cluster. His124 is a (2E)-4-hydroxy-3-methylbut-2-enyl diphosphate binding site. His124 serves as a coordination point for dimethylallyl diphosphate. His124 lines the isopentenyl diphosphate pocket. Glu126 functions as the Proton donor in the catalytic mechanism. (2E)-4-hydroxy-3-methylbut-2-enyl diphosphate is bound at residue Thr167. Residue Cys197 participates in [4Fe-4S] cluster binding. Residues Ser225, Ser226, Asn227, and Ser269 each coordinate (2E)-4-hydroxy-3-methylbut-2-enyl diphosphate. Residues Ser225, Ser226, Asn227, and Ser269 each coordinate dimethylallyl diphosphate. Positions 225, 226, 227, and 269 each coordinate isopentenyl diphosphate.

It belongs to the IspH family. Requires [4Fe-4S] cluster as cofactor.

It carries out the reaction isopentenyl diphosphate + 2 oxidized [2Fe-2S]-[ferredoxin] + H2O = (2E)-4-hydroxy-3-methylbut-2-enyl diphosphate + 2 reduced [2Fe-2S]-[ferredoxin] + 2 H(+). The catalysed reaction is dimethylallyl diphosphate + 2 oxidized [2Fe-2S]-[ferredoxin] + H2O = (2E)-4-hydroxy-3-methylbut-2-enyl diphosphate + 2 reduced [2Fe-2S]-[ferredoxin] + 2 H(+). The protein operates within isoprenoid biosynthesis; dimethylallyl diphosphate biosynthesis; dimethylallyl diphosphate from (2E)-4-hydroxy-3-methylbutenyl diphosphate: step 1/1. Its pathway is isoprenoid biosynthesis; isopentenyl diphosphate biosynthesis via DXP pathway; isopentenyl diphosphate from 1-deoxy-D-xylulose 5-phosphate: step 6/6. Functionally, catalyzes the conversion of 1-hydroxy-2-methyl-2-(E)-butenyl 4-diphosphate (HMBPP) into a mixture of isopentenyl diphosphate (IPP) and dimethylallyl diphosphate (DMAPP). Acts in the terminal step of the DOXP/MEP pathway for isoprenoid precursor biosynthesis. The sequence is that of 4-hydroxy-3-methylbut-2-enyl diphosphate reductase from Haemophilus influenzae (strain 86-028NP).